A 143-amino-acid polypeptide reads, in one-letter code: Probable cyclic pyranopterin monophosphate synthase (143 aa).

Substrate-binding positions include 61-63 (MCH) and 97-98 (ME). Residue D112 is part of the active site.

The protein belongs to the MoaC family. In terms of assembly, homohexamer; trimer of dimers.

It catalyses the reaction (8S)-3',8-cyclo-7,8-dihydroguanosine 5'-triphosphate = cyclic pyranopterin phosphate + diphosphate. Its pathway is cofactor biosynthesis; molybdopterin biosynthesis. Catalyzes the conversion of (8S)-3',8-cyclo-7,8-dihydroguanosine 5'-triphosphate to cyclic pyranopterin monophosphate (cPMP). The polypeptide is Probable cyclic pyranopterin monophosphate synthase (Sulfolobus acidocaldarius (strain ATCC 33909 / DSM 639 / JCM 8929 / NBRC 15157 / NCIMB 11770)).